A 68-amino-acid chain; its full sequence is uncharacterized protein (68 aa).

An N-terminal signal peptide occupies residues Met1–Ser28.

This is an uncharacterized protein from Escherichia coli (strain K12).